The primary structure comprises 281 residues: DegV domain-containing protein YqaC (281 aa).

Residues 3–279 (LAVITDSSAD…LNTVAYGISP (277 aa)) enclose the DegV domain. Residues Thr60 and Ser93 each coordinate hexadecanoate.

May bind long-chain fatty acids, such as palmitate, and may play a role in lipid transport or fatty acid metabolism. This chain is DegV domain-containing protein YqaC (yqaC), found in Lactococcus lactis subsp. lactis (strain IL1403) (Streptococcus lactis).